The sequence spans 114 residues: Ribosome-binding factor A (114 aa).

This sequence belongs to the RbfA family. In terms of assembly, monomer. Binds 30S ribosomal subunits, but not 50S ribosomal subunits or 70S ribosomes.

It is found in the cytoplasm. One of several proteins that assist in the late maturation steps of the functional core of the 30S ribosomal subunit. Associates with free 30S ribosomal subunits (but not with 30S subunits that are part of 70S ribosomes or polysomes). Required for efficient processing of 16S rRNA. May interact with the 5'-terminal helix region of 16S rRNA. The protein is Ribosome-binding factor A of Staphylococcus saprophyticus subsp. saprophyticus (strain ATCC 15305 / DSM 20229 / NCIMB 8711 / NCTC 7292 / S-41).